The chain runs to 103 residues: ATP-dependent Clp protease adapter protein ClpS 1 (103 aa).

It belongs to the ClpS family. Binds to the N-terminal domain of the chaperone ClpA.

In terms of biological role, involved in the modulation of the specificity of the ClpAP-mediated ATP-dependent protein degradation. This Rhodopseudomonas palustris (strain ATCC BAA-98 / CGA009) protein is ATP-dependent Clp protease adapter protein ClpS 1.